The following is a 385-amino-acid chain: Phosphatidate cytidylyltransferase, mitochondrial (385 aa).

It belongs to the TAM41 family. Mg(2+) is required as a cofactor. Co(2+) serves as cofactor. Requires Cu(2+) as cofactor.

Its subcellular location is the mitochondrion inner membrane. It catalyses the reaction a 1,2-diacyl-sn-glycero-3-phosphate + CTP + H(+) = a CDP-1,2-diacyl-sn-glycerol + diphosphate. Its pathway is phospholipid metabolism; CDP-diacylglycerol biosynthesis; CDP-diacylglycerol from sn-glycerol 3-phosphate: step 3/3. Catalyzes the formation of CDP-diacylglycerol (CDP-DAG) from phosphatidic acid (PA) in the mitochondrial inner membrane. Required for the biosynthesis of the dimeric phospholipid cardiolipin, which stabilizes supercomplexes of the mitochondrial respiratory chain in the mitochondrial inner membrane. The polypeptide is Phosphatidate cytidylyltransferase, mitochondrial (TAM41) (Saccharomyces cerevisiae (strain ATCC 204508 / S288c) (Baker's yeast)).